Consider the following 622-residue polypeptide: ABC transporter permease protein YxdM (622 aa).

10 helical membrane passes run 20–40 (AFFLSSAFSVLIFFTFAMFLF), 56–76 (GLTAAEWMIFVFSFLFVLYSV), 118–138 (AGIIGGFIFSKTFFTVGAYIL), 154–174 (ITACGFLLLFFFLSQFTILFV), 195–215 (PSVLLSLFGIACLCGGYGMVL), 219–239 (VHGAEPFIILLLTVIGTYFFF), 279–299 (LFFIVSIISAVAFTATGVLAM), 498–518 (TVQLPSLSLFIGLFIAIVFFV), 558–578 (IQLAILFFFPFVIAVMHTLFA), and 590–610 (VAGPLSLTIGGFFIFQLLFFL).

This sequence belongs to the ABC-4 integral membrane protein family. As to quaternary structure, the complex is composed of two ATP-binding proteins (YxdL) and two transmembrane proteins (YxdM).

It localises to the cell membrane. Part of the ABC transporter complex YxdLM which could be involved in peptide resistance. This chain is ABC transporter permease protein YxdM (yxdM), found in Bacillus subtilis (strain 168).